The sequence spans 305 residues: DNA-directed RNA polymerase 35 kDa subunit (305 aa).

The protein belongs to the poxviridae DNA-directed RNA polymerase 35 kDa subunit family. The DNA-dependent RNA polymerase used for intermediate and late genes expression consists of eight subunits 147 kDa, 133 kDa, 35 kDa, 30 kDa, 22 kDa, 19 kDa, 18 kDa and 7 kDa totalling more than 500 kDa in mass. The same holoenzyme, with the addition of the transcription-specificity factor RAP94, is used for early gene expression.

Its subcellular location is the virion. The catalysed reaction is RNA(n) + a ribonucleoside 5'-triphosphate = RNA(n+1) + diphosphate. Its function is as follows. Part of the DNA-dependent RNA polymerase which catalyzes the transcription of viral DNA into RNA using the four ribonucleoside triphosphates as substrates. Responsible for the transcription of early, intermediate and late genes. DNA-dependent RNA polymerase associates with the early transcription factor (ETF), itself composed of D6 and A7, thereby allowing the early genes transcription. Late transcription, and probably also intermediate transcription, require newly synthesized RNA polymerase. The sequence is that of DNA-directed RNA polymerase 35 kDa subunit (OPG156) from Bos taurus (Bovine).